We begin with the raw amino-acid sequence, 140 residues long: ATP synthase epsilon chain (140 aa).

This sequence belongs to the ATPase epsilon chain family. F-type ATPases have 2 components, CF(1) - the catalytic core - and CF(0) - the membrane proton channel. CF(1) has five subunits: alpha(3), beta(3), gamma(1), delta(1), epsilon(1). CF(0) has three main subunits: a, b and c.

The protein localises to the cell inner membrane. In terms of biological role, produces ATP from ADP in the presence of a proton gradient across the membrane. The chain is ATP synthase epsilon chain from Yersinia pseudotuberculosis serotype O:1b (strain IP 31758).